Reading from the N-terminus, the 93-residue chain is Small ribosomal subunit protein bS20c (93 aa).

This sequence belongs to the bacterial ribosomal protein bS20 family.

It is found in the plastid. The protein resides in the chloroplast. In terms of biological role, binds directly to 16S ribosomal RNA. The sequence is that of Small ribosomal subunit protein bS20c from Thalassiosira pseudonana (Marine diatom).